The sequence spans 391 residues: Multidrug resistance protein MdtL (391 aa).

The next 12 membrane-spanning stretches (helical) occupy residues F4–V24, I42–A62, P69–E89, L93–F113, L131–M151, S158–L178, F203–V222, A245–F265, T269–P289, V293–M313, L331–I351, and M356–A376.

It belongs to the major facilitator superfamily. DHA1 family. MdtL (TC 2.A.1.2.22) subfamily.

The protein resides in the cell inner membrane. Confers resistance to chloramphenicol. This chain is Multidrug resistance protein MdtL, found in Escherichia coli O17:K52:H18 (strain UMN026 / ExPEC).